The following is a 607-amino-acid chain: Glycosyltransferase 25 family member (607 aa).

The N-terminal stretch at 1-22 is a signal peptide; sequence MKPVSCVGLLVLLVGVLVTVKG. Residues asparagine 226, asparagine 254, asparagine 514, and asparagine 565 are each glycosylated (N-linked (GlcNAc...) asparagine). The tract at residues 566–607 is disordered; that stretch reads DTSDSSAEKKGDKEQLSSKTLMDSTISRDEHELSVANRKSEL. Composition is skewed to basic and acidic residues over residues 571–581 and 591–607; these read SAEKKGDKEQL and ISRDEHELSVANRKSEL. Positions 604 to 607 match the Prevents secretion from ER motif; the sequence is KSEL.

This sequence belongs to the glycosyltransferase 25 family.

Its subcellular location is the endoplasmic reticulum lumen. The sequence is that of Glycosyltransferase 25 family member from Aedes aegypti (Yellowfever mosquito).